A 344-amino-acid chain; its full sequence is Ion-translocating oxidoreductase complex subunit D (344 aa).

A run of 4 helical transmembrane segments spans residues 23–43 (LVLG…GPGT), 44–64 (LLNL…MLAL), 77–99 (SALV…WLTL), and 120–140 (PFNP…LEMT). Threonine 172 carries the FMN phosphoryl threonine modification. A run of 5 helical transmembrane segments spans residues 198 to 218 (LGSA…LFLL), 222 to 242 (LFTW…SLLF), 252 to 272 (GSPL…FIVT), 285 to 305 (LVFG…GGYP), and 306 to 326 (DGVA…DYYT).

This sequence belongs to the NqrB/RnfD family. In terms of assembly, the complex is composed of six subunits: RnfA, RnfB, RnfC, RnfD, RnfE and RnfG. Requires FMN as cofactor.

Its subcellular location is the cell inner membrane. In terms of biological role, part of a membrane-bound complex that couples electron transfer with translocation of ions across the membrane. This Pseudomonas aeruginosa (strain UCBPP-PA14) protein is Ion-translocating oxidoreductase complex subunit D.